Here is a 315-residue protein sequence, read N- to C-terminus: Small ribosomal subunit protein mS45 (315 aa).

A mitochondrion-targeting transit peptide spans 1–66 (MRNSVEFSQL…SKYVACNSRS (66 aa)).

It belongs to the mitochondrion-specific ribosomal protein mS45 family. Component of the mitochondrial small ribosomal subunit (mt-SSU). Mature yeast 74S mitochondrial ribosomes consist of a small (37S) and a large (54S) subunit. The 37S small subunit contains a 15S ribosomal RNA (15S mt-rRNA) and at least 32 different proteins. The 54S large subunit contains a 21S rRNA (21S mt-rRNA) and at least 45 different proteins.

It localises to the mitochondrion. Functionally, component of the mitochondrial ribosome (mitoribosome), a dedicated translation machinery responsible for the synthesis of mitochondrial genome-encoded proteins, including at least some of the essential transmembrane subunits of the mitochondrial respiratory chain. The mitoribosomes are attached to the mitochondrial inner membrane and translation products are cotranslationally integrated into the membrane. Required for mitochondrial protein synthesis. Has a role in mitochondrial integrity and cell respiration. This Schizosaccharomyces pombe (strain 972 / ATCC 24843) (Fission yeast) protein is Small ribosomal subunit protein mS45 (bot1).